We begin with the raw amino-acid sequence, 429 residues long: Ribosomal RNA small subunit methyltransferase B (429 aa).

S-adenosyl-L-methionine is bound by residues 254–260, D277, D303, and D322; that span reads CAAPGGK. C375 (nucleophile) is an active-site residue. The tract at residues 397–419 is disordered; it reads ALSETGTPDQPGQQNLPGGEEGD. Positions 400-412 are enriched in polar residues; the sequence is ETGTPDQPGQQNL.

The protein belongs to the class I-like SAM-binding methyltransferase superfamily. RsmB/NOP family.

It is found in the cytoplasm. It carries out the reaction cytidine(967) in 16S rRNA + S-adenosyl-L-methionine = 5-methylcytidine(967) in 16S rRNA + S-adenosyl-L-homocysteine + H(+). In terms of biological role, specifically methylates the cytosine at position 967 (m5C967) of 16S rRNA. The polypeptide is Ribosomal RNA small subunit methyltransferase B (Salmonella agona (strain SL483)).